The chain runs to 94 residues: Co-chaperonin GroES (94 aa).

The protein belongs to the GroES chaperonin family. Heptamer of 7 subunits arranged in a ring. Interacts with the chaperonin GroEL.

It localises to the cytoplasm. Its function is as follows. Together with the chaperonin GroEL, plays an essential role in assisting protein folding. The GroEL-GroES system forms a nano-cage that allows encapsulation of the non-native substrate proteins and provides a physical environment optimized to promote and accelerate protein folding. GroES binds to the apical surface of the GroEL ring, thereby capping the opening of the GroEL channel. The chain is Co-chaperonin GroES from Clostridium kluyveri (strain NBRC 12016).